Reading from the N-terminus, the 282-residue chain is HTH-type transcriptional activator RhaR (282 aa).

An HTH araC/xylS-type domain is found at 179 to 277; it reads DKLITRLAAS…GMTPSQWRHL (99 aa). 2 DNA-binding regions (H-T-H motif) span residues 196–217 and 244–267; these read DKFC…RQQT and ISDI…TRET.

Binds DNA as a dimer.

Its subcellular location is the cytoplasm. Functionally, activates expression of the rhaSR operon in response to L-rhamnose. This is HTH-type transcriptional activator RhaR from Shigella dysenteriae serotype 1 (strain Sd197).